We begin with the raw amino-acid sequence, 535 residues long: MKTKYIFVTGGVVSSLGKGITAASLGRLLKNRGLKVSIQKFDPYINVDPGTMSPYQHGEVFVTDDGAETDLDLGHYERFIDENLSKNSNVTTGKVYWSVINKERRGDYLGGTVQVIPHITNELKERVYRVAKEKDVDVVITEIGGTVGDIESLPFLEAIRQIKYEVGFGNSCFIHVTLLPYLRKAGEIKTKPTQHSVKELRGIGIQPDIIVCRTEKEISKDVRSKIGLFCNIDGDSVISNLDAENLYEVPLMLHDQGLDSLVCKKLELECQEVDNSEWESMVKNIKSLSGEVTIGLVGKYVELHDAYISVVESLNHGGFANNVSVNVKWINSEEVTKDNVDSVLSDVDGILVPGGFGDRGIEGKIEAIRWARENKIPFFGICLGMQCAVIEYARNVLGLEGAHSSEIDPQTKYPVIDLMPDQKDIDDKGGTMRLGLYACKLSKDTNAYDAYEEEVIYERHRHRYEFNNEFRKRLTEEGLILAGTSPDDRLVEIVEIKDHPWFVGVQFHPEFKSRPNRPHALFRDFIKVACTVKEK.

An amidoligase domain region spans residues 1–268 (MKTKYIFVTG…DSLVCKKLEL (268 aa)). Residue S14 participates in CTP binding. S14 provides a ligand contact to UTP. Residue 15–20 (SLGKGI) coordinates ATP. Y55 lines the L-glutamine pocket. D72 is an ATP binding site. Mg(2+) is bound by residues D72 and E142. CTP-binding positions include 149 to 151 (DIE), 189 to 194 (KTKPTQ), and K225. Residues 189 to 194 (KTKPTQ) and K225 contribute to the UTP site. The Glutamine amidotransferase type-1 domain occupies 293 to 535 (TIGLVGKYVE…IKVACTVKEK (243 aa)). L-glutamine is bound at residue G355. The Nucleophile; for glutamine hydrolysis role is filled by C382. L-glutamine-binding positions include 383–386 (LGMQ), E406, and R463. Residues H508 and E510 contribute to the active site.

This sequence belongs to the CTP synthase family. Homotetramer.

The enzyme catalyses UTP + L-glutamine + ATP + H2O = CTP + L-glutamate + ADP + phosphate + 2 H(+). It catalyses the reaction L-glutamine + H2O = L-glutamate + NH4(+). It carries out the reaction UTP + NH4(+) + ATP = CTP + ADP + phosphate + 2 H(+). It functions in the pathway pyrimidine metabolism; CTP biosynthesis via de novo pathway; CTP from UDP: step 2/2. Its activity is regulated as follows. Allosterically activated by GTP, when glutamine is the substrate; GTP has no effect on the reaction when ammonia is the substrate. The allosteric effector GTP functions by stabilizing the protein conformation that binds the tetrahedral intermediate(s) formed during glutamine hydrolysis. Inhibited by the product CTP, via allosteric rather than competitive inhibition. Catalyzes the ATP-dependent amination of UTP to CTP with either L-glutamine or ammonia as the source of nitrogen. Regulates intracellular CTP levels through interactions with the four ribonucleotide triphosphates. The polypeptide is CTP synthase (Clostridium acetobutylicum (strain ATCC 824 / DSM 792 / JCM 1419 / IAM 19013 / LMG 5710 / NBRC 13948 / NRRL B-527 / VKM B-1787 / 2291 / W)).